A 752-amino-acid polypeptide reads, in one-letter code: Myb-related protein A (752 aa).

The segment at 1-22 (MAKRSRSEDEDDDLQYADHDYE) is disordered. HTH myb-type domains lie at 30–81 (KKLW…QKVL), 82–137 (NPEL…NPEV), and 138–188 (KKSS…RRKV). DNA-binding regions (H-T-H motif) lie at residues 58 to 81 (WTLI…QKVL), 110 to 133 (WSLI…HNHL), and 161 to 184 (WAEI…NSTM). Lys199 is covalently cross-linked (Glycyl lysine isopeptide (Lys-Gly) (interchain with G-Cter in SUMO2)). The transcriptional activation domain stretch occupies residues 230 to 295 (IPGYQYVSPE…RIPSQPGSFS (66 aa)). The negative regulatory domain stretch occupies residues 298–553 (SGSFLMDDNM…IRRSILGTTP (256 aa)). The residue at position 394 (Lys394) is an N6-acetyllysine. Positions 451–480 (RKMRVGHSPGSELRDGSLNDGGNMALKHTP) are disordered. Glycyl lysine isopeptide (Lys-Gly) (interchain with G-Cter in SUMO2) cross-links involve residues Lys592 and Lys602.

As to quaternary structure, component of the DREAM complex (also named LINC complex) at least composed of E2F4, E2F5, LIN9, LIN37, LIN52, LIN54, MYBL1, MYBL2, RBL1, RBL2, RBBP4, TFDP1 and TFDP2. The complex exists in quiescent cells where it represses cell cycle-dependent genes. It dissociates in S phase when LIN9, LIN37, LIN52 and LIN54 form a subcomplex that binds to MYBL2. As to expression, expressed in a variety of lymphoid and solid tumor lines cultured in vitro.

It localises to the nucleus. In terms of biological role, transcription factor that specifically recognizes the sequence 5'-YAAC[GT]G-3'. Acts as a master regulator of male meiosis by promoting expression of piRNAs: activates expression of both piRNA precursor RNAs and expression of protein-coding genes involved in piRNA metabolism. The piRNA metabolic process mediates the repression of transposable elements during meiosis by forming complexes composed of piRNAs and Piwi proteins and governs the methylation and subsequent repression of transposons, which is essential for the germline integrity. Transcriptional activator of SOX30. This chain is Myb-related protein A (MYBL1), found in Homo sapiens (Human).